We begin with the raw amino-acid sequence, 261 residues long: uncharacterized protein (261 aa).

This sequence belongs to the BtpA family.

This is an uncharacterized protein from Methanocaldococcus jannaschii (strain ATCC 43067 / DSM 2661 / JAL-1 / JCM 10045 / NBRC 100440) (Methanococcus jannaschii).